Consider the following 339-residue polypeptide: Protein-arginine kinase (339 aa).

The Phosphagen kinase C-terminal domain maps to 14–242 (IVINSNISLS…LNVISEEKKF (229 aa)). Residues 17–21 (NSNIS), 164–168 (RASVN), and 195–200 (KGLYEE) each bind ATP.

Belongs to the ATP:guanido phosphotransferase family.

It catalyses the reaction L-arginyl-[protein] + ATP = N(omega)-phospho-L-arginyl-[protein] + ADP + H(+). In terms of biological role, catalyzes the specific phosphorylation of arginine residues in proteins. The chain is Protein-arginine kinase from Clostridium botulinum (strain Eklund 17B / Type B).